A 333-amino-acid polypeptide reads, in one-letter code: Sphingomyelinase C (333 aa).

Positions 1 to 27 (MKGKLLKGVLSLGVGLGALYSGTSAQA) are cleaved as a signal peptide. The cysteines at positions 150 and 186 are disulfide-linked.

The protein belongs to the neutral sphingomyelinase family. The cofactor is Mg(2+).

Its subcellular location is the secreted. The catalysed reaction is a sphingomyelin + H2O = phosphocholine + an N-acylsphing-4-enine + H(+). With respect to regulation, activated by cobalt and manganese ions. Required, with sphingomyelinase, to effect target cell lysis (hemolysis). This chain is Sphingomyelinase C (sph), found in Bacillus cereus.